The following is a 346-amino-acid chain: Large ribosomal subunit protein uL10 (346 aa).

A disordered region spans residues 305–346 (EVPAAPAPEAKEEKKEEAEEEEEEKKEVSEEDLSAGLGALFG). Positions 322–337 (AEEEEEEKKEVSEEDL) are enriched in acidic residues.

Belongs to the universal ribosomal protein uL10 family. Part of the 50S ribosomal subunit. Forms part of the ribosomal stalk which helps the ribosome interact with GTP-bound translation factors. Forms a heptameric L10(L12)2(L12)2(L12)2 complex, where L10 forms an elongated spine to which the L12 dimers bind in a sequential fashion.

Forms part of the ribosomal stalk, playing a central role in the interaction of the ribosome with GTP-bound translation factors. This chain is Large ribosomal subunit protein uL10, found in Ignicoccus hospitalis (strain KIN4/I / DSM 18386 / JCM 14125).